Consider the following 554-residue polypeptide: Oxygen-dependent choline dehydrogenase (554 aa).

Position 4-33 (4-33 (DYIIIGAGSAGNVLATRLTEDPNTTVLLLE)) interacts with FAD. His473 (proton acceptor) is an active-site residue.

Belongs to the GMC oxidoreductase family. Requires FAD as cofactor.

The enzyme catalyses choline + A = betaine aldehyde + AH2. It carries out the reaction betaine aldehyde + NAD(+) + H2O = glycine betaine + NADH + 2 H(+). The protein operates within amine and polyamine biosynthesis; betaine biosynthesis via choline pathway; betaine aldehyde from choline (cytochrome c reductase route): step 1/1. Functionally, involved in the biosynthesis of the osmoprotectant glycine betaine. Catalyzes the oxidation of choline to betaine aldehyde and betaine aldehyde to glycine betaine at the same rate. The polypeptide is Oxygen-dependent choline dehydrogenase (Klebsiella pneumoniae subsp. pneumoniae (strain ATCC 700721 / MGH 78578)).